Here is a 571-residue protein sequence, read N- to C-terminus: Proline--tRNA ligase 1 (571 aa).

It belongs to the class-II aminoacyl-tRNA synthetase family. ProS type 1 subfamily. As to quaternary structure, homodimer.

It is found in the cytoplasm. The enzyme catalyses tRNA(Pro) + L-proline + ATP = L-prolyl-tRNA(Pro) + AMP + diphosphate. In terms of biological role, catalyzes the attachment of proline to tRNA(Pro) in a two-step reaction: proline is first activated by ATP to form Pro-AMP and then transferred to the acceptor end of tRNA(Pro). As ProRS can inadvertently accommodate and process non-cognate amino acids such as alanine and cysteine, to avoid such errors it has two additional distinct editing activities against alanine. One activity is designated as 'pretransfer' editing and involves the tRNA(Pro)-independent hydrolysis of activated Ala-AMP. The other activity is designated 'posttransfer' editing and involves deacylation of mischarged Ala-tRNA(Pro). The misacylated Cys-tRNA(Pro) is not edited by ProRS. This is Proline--tRNA ligase 1 from Clostridioides difficile (strain 630) (Peptoclostridium difficile).